The sequence spans 767 residues: MSLFNKVTKTFQWGQHTVTLETGEISRQAGGAVIVNIDDTVVLATVVGAKNAKPGQDFFPLTVDYIEKTYAAGKIPGSFFKREAKPSELEVLTSRLIDRPLRPLFPEGFYNEVHVVVHVLSLNPEASADIAALIGSSAALAISGIPFNGPVGAARVGYVNGEYVLNPGPTQLKSSKMDLVVAGTEAAVLMVESEADQLTEEVMLGAVVYGHEQAKVAIAAINELVRDAGKPAWDWQPPARNEPLIAKVAEFGLAKIEAAYQIRNKQARTHACRAAYAEVKISLAEAGVVFDNVDVDNLLFELEAKTVRGQILQGEPRIDGRDTRTVRPIEIRTGVLPRTHGSALFTRGETQALVVATLGTDQDSQRIDALAGDFRDSFLFHYNMPPFATGEVGRMGTTKRRETGHGRLAKRALVPLLPPKDEFGYTIRVVSEITESNGSSSMASVCGGCLAMMDAGVPMKAHVAGIAMGLIKEGNRFAVLTDILGDEDHLGDMDFKVAGTTAGVTALQMDIKIQGITKEIMQVALAQAKEARLHILGKMVEAMGTANTEVSNFAPRLYTMKINPEKIRDVIGKGGSVIRALTEETGCQIDIGEDGTITIASTDADKAELAKKRIADITAEAEIGKVYEGPVVKILDFGALINILPGKDGLLHISQIAHQRVEKVTDFLTEGQVVKVKVLETDEKGRIKLSMKALIERPEGMEFEERAPRREGGFGDRGDRGDRGPRRDRGGDRPERGERPARAEQPATEESGAPAAGQPQQQQGQQQ.

The Mg(2+) site is built by D488 and D494. The KH domain occupies 555-614 (PRLYTMKINPEKIRDVIGKGGSVIRALTEETGCQIDIGEDGTITIASTDADKAELAKKRI). Residues 624–692 (GKVYEGPVVK…EKGRIKLSMK (69 aa)) form the S1 motif domain. The span at 700–742 (GMEFEERAPRREGGFGDRGDRGDRGPRRDRGGDRPERGERPAR) shows a compositional bias: basic and acidic residues. A disordered region spans residues 700–767 (GMEFEERAPR…QPQQQQGQQQ (68 aa)). A compositionally biased stretch (low complexity) spans 752–767 (GAPAAGQPQQQQGQQQ).

It belongs to the polyribonucleotide nucleotidyltransferase family. Mg(2+) serves as cofactor.

Its subcellular location is the cytoplasm. The catalysed reaction is RNA(n+1) + phosphate = RNA(n) + a ribonucleoside 5'-diphosphate. Involved in mRNA degradation. Catalyzes the phosphorolysis of single-stranded polyribonucleotides processively in the 3'- to 5'-direction. The sequence is that of Polyribonucleotide nucleotidyltransferase from Leptothrix cholodnii (strain ATCC 51168 / LMG 8142 / SP-6) (Leptothrix discophora (strain SP-6)).